The sequence spans 362 residues: Heat-inducible transcription repressor HrcA (362 aa).

The protein belongs to the HrcA family.

Its function is as follows. Negative regulator of class I heat shock genes (grpE-dnaK-dnaJ and groELS operons). Prevents heat-shock induction of these operons. In Nitrobacter hamburgensis (strain DSM 10229 / NCIMB 13809 / X14), this protein is Heat-inducible transcription repressor HrcA.